The following is a 309-amino-acid chain: SERTA domain-containing protein 2 (309 aa).

Disordered regions lie at residues 1–30, 79–114, and 175–220; these read MLGKGGKRKFDEHEDGLEGKIVSPSDGPSR, EGSLRPAFTPSSQPSNSLSDSYQEAPPPAPHPCDLG, and PTST…MDSL. The segment covering 8-18 has biased composition (basic and acidic residues); it reads RKFDEHEDGLE. The 48-residue stretch at 33–80 folds into the SERTA domain; that stretch reads YTLQRQTIFNISLMKLYNHRPLTEPSLQKTVLINNMLRRIQEELKQEG. Composition is skewed to low complexity over residues 89-99 and 175-189; these read SSQPSNSLSDS and PTSTSTEAAHTAAPE. A compositionally biased stretch (basic and acidic residues) spans 204-216; that stretch reads EGPEEGRTDDSRF. A required for transactivation activity region spans residues 230-306; the sequence is TGFLTDLTLD…TELDHIMEVL (77 aa). The short motif at 233–238 is the Nuclear export signal (NES) element; that stretch reads LTDLTL.

As to quaternary structure, interacts with XPO1; which mediates nuclear export. Interacts with TFDP1; modulates transactivation activity of TFDP1/E2F complexes. In terms of processing, polyubiquitinated, which promotes proteasomal degradation. As to expression, expressed in white and brown adipose tissue.

The protein localises to the nucleus. It localises to the cytoplasm. Functionally, acts at E2F-responsive promoters as coregulator to integrate signals provided by PHD- and/or bromodomain-containing transcription factors. May act as coactivator as well as corepressor of E2F1-TFDP1 and E2F4-TFDP1 complexes on E2F consensus binding sites, which would activate or inhibit E2F-target genes expression. Modulates fat storage by down-regulating the expression of key genes involved in adipocyte lipolysis, thermogenesis and oxidative metabolism. The polypeptide is SERTA domain-containing protein 2 (Sertad2) (Mus musculus (Mouse)).